The chain runs to 168 residues: Ribosome maturation factor RimM (168 aa).

The region spanning 95–166 (EHEFYYSDII…RIQITPMEGL (72 aa)) is the PRC barrel domain.

This sequence belongs to the RimM family. In terms of assembly, binds ribosomal protein uS19.

The protein localises to the cytoplasm. An accessory protein needed during the final step in the assembly of 30S ribosomal subunit, possibly for assembly of the head region. Essential for efficient processing of 16S rRNA. May be needed both before and after RbfA during the maturation of 16S rRNA. It has affinity for free ribosomal 30S subunits but not for 70S ribosomes. This Staphylococcus saprophyticus subsp. saprophyticus (strain ATCC 15305 / DSM 20229 / NCIMB 8711 / NCTC 7292 / S-41) protein is Ribosome maturation factor RimM.